We begin with the raw amino-acid sequence, 351 residues long: tRNA-specific 2-thiouridylase MnmA (351 aa).

6 to 13 (ALSGGTDS) is a binding site for ATP. Cys96 (nucleophile) is an active-site residue. Residues Cys96 and Cys193 are joined by a disulfide bond. ATP is bound at residue Gly120. Residues 143–145 (KDQ) are interaction with tRNA. Cys193 functions as the Cysteine persulfide intermediate in the catalytic mechanism. The interaction with tRNA stretch occupies residues 298–299 (RY).

This sequence belongs to the MnmA/TRMU family.

It localises to the cytoplasm. It catalyses the reaction S-sulfanyl-L-cysteinyl-[protein] + uridine(34) in tRNA + AH2 + ATP = 2-thiouridine(34) in tRNA + L-cysteinyl-[protein] + A + AMP + diphosphate + H(+). Its function is as follows. Catalyzes the 2-thiolation of uridine at the wobble position (U34) of tRNA, leading to the formation of s(2)U34. The chain is tRNA-specific 2-thiouridylase MnmA from Nitratidesulfovibrio vulgaris (strain DSM 19637 / Miyazaki F) (Desulfovibrio vulgaris).